A 130-amino-acid chain; its full sequence is MEILNQFSQFSPNMEAQGASSIPQPSQDAHEKARQQAENQETAKNGMISQILDQAAMQRLSNLAVAKPEKAQMVEAALINMARRGQLSGKMTDDGLKALMERVSAQTQKATSVKFDRRRNELDSDEELDL.

2 stretches are compositionally biased toward polar residues: residues 1–27 (MEILNQFSQFSPNMEAQGASSIPQPSQ) and 36–46 (QAENQETAKNG). 2 disordered regions span residues 1–46 (MEIL…AKNG) and 103–130 (VSAQTQKATSVKFDRRRNELDSDEELDL). Residues 27 to 51 (QDAHEKARQQAENQETAKNGMISQI) are a coiled coil.

This sequence belongs to the PDCD5 family.

This is an uncharacterized protein from Caenorhabditis elegans.